Reading from the N-terminus, the 237-residue chain is Mannose-specific lectin alpha chain (237 aa).

E8 and D10 together coordinate Mn(2+). Residues D10, Y12, N14, and D19 each contribute to the Ca(2+) site. Residue Y12 participates in a carbohydrate binding. The Mn(2+) site is built by D19, H24, and S34. L99–Y100 lines the a carbohydrate pocket. A Ca(2+)-binding site is contributed by D208. Residue R228 participates in a carbohydrate binding.

The protein belongs to the leguminous lectin family. As to quaternary structure, homotetramer. In terms of processing, the beta and gamma chains are produced by partial proteolytic processing of the lectin alpha chain by an asparaginyl endopeptidase.

Functionally, D-mannose/D-glucose-binding lectin. Also binds derivatives of glucose and mannose such as more complex glycans. This chain is Mannose-specific lectin alpha chain, found in Cymbosema roseum (Dioclea purpurea).